Reading from the N-terminus, the 167-residue chain is Ribosome maturation factor RimM (167 aa).

The 72-residue stretch at 94-165 (ENEYYYSDII…KIIITPMEGL (72 aa)) folds into the PRC barrel domain.

Belongs to the RimM family. Binds ribosomal protein uS19.

It is found in the cytoplasm. Its function is as follows. An accessory protein needed during the final step in the assembly of 30S ribosomal subunit, possibly for assembly of the head region. Essential for efficient processing of 16S rRNA. May be needed both before and after RbfA during the maturation of 16S rRNA. It has affinity for free ribosomal 30S subunits but not for 70S ribosomes. This Staphylococcus aureus (strain bovine RF122 / ET3-1) protein is Ribosome maturation factor RimM.